The chain runs to 295 residues: GTPase Era (295 aa).

In terms of domain architecture, Era-type G spans 7-176 (KTVSVCIIGR…ITSKAKIAPW (170 aa)). The G1 stretch occupies residues 15-22 (GRPNSGKS). GTP is bound at residue 15 to 22 (GRPNSGKS). The segment at 41–45 (QTTRS) is G2. The segment at 62–65 (DTPG) is G3. Residues 62–66 (DTPGI) and 124–127 (NKID) contribute to the GTP site. The segment at 124–127 (NKID) is G4. Residues 152–154 (ISA) are G5. The region spanning 204 to 281 (LQQELPYKLT…HLFLFVKVRE (78 aa)) is the KH type-2 domain.

Belongs to the TRAFAC class TrmE-Era-EngA-EngB-Septin-like GTPase superfamily. Era GTPase family. As to quaternary structure, monomer.

Its subcellular location is the cytoplasm. It localises to the cell inner membrane. Its function is as follows. An essential GTPase that binds both GDP and GTP, with rapid nucleotide exchange. Plays a role in 16S rRNA processing and 30S ribosomal subunit biogenesis and possibly also in cell cycle regulation and energy metabolism. In Rickettsia bellii (strain OSU 85-389), this protein is GTPase Era.